A 555-amino-acid polypeptide reads, in one-letter code: Membrane protein insertase YidC (555 aa).

The next 5 membrane-spanning stretches (helical) occupy residues 7 to 24 (VLWV…DNWQ), 367 to 387 (WGWS…PLSA), 437 to 457 (LPVV…LASV), 476 to 496 (PFFI…SLNP), and 511 to 531 (PIAF…YYVV).

This sequence belongs to the OXA1/ALB3/YidC family. Type 1 subfamily. Interacts with the Sec translocase complex via SecD. Specifically interacts with transmembrane segments of nascent integral membrane proteins during membrane integration.

The protein localises to the cell inner membrane. Its function is as follows. Required for the insertion and/or proper folding and/or complex formation of integral membrane proteins into the membrane. Involved in integration of membrane proteins that insert both dependently and independently of the Sec translocase complex, as well as at least some lipoproteins. Aids folding of multispanning membrane proteins. This Burkholderia lata (strain ATCC 17760 / DSM 23089 / LMG 22485 / NCIMB 9086 / R18194 / 383) protein is Membrane protein insertase YidC.